Here is a 906-residue protein sequence, read N- to C-terminus: MSDKAMNLFGARDTLQVPGSDKKLYFYNLNKLQGHDVSRLPVSIKVLLESVLREANDYDVRREDVETVAGWSATNPEVEIPFKPARVILQDFTGVPAVVDLAAMRSAMVKLGGDPSKINPLIPVDLVIDHSVQVDEFGTEFALANNMALEFERNRERYEFLRWGQQAFDNFGVVPPASGIVHQVNLEYLAKGVQSRAEDDGEVVYPDSLVGTDSHTTMINGLGIVGWGVGGIEAEAVMLGQPIYMLMPEVIGFKITGAMPEGATATDLALRVTQMLREKGVVGKFVEFYGAGLSNMTLPDRATIANMAPEYGATMGFFPVDDEALRYLRRTGRLEDEIGLVEAYYKAQGMFRTDETPDPVFTDTIELDLATIVPSLAGPKRPQDRVNLSDMHSVFNEALTAPVKNRGFELGSDKLDAQGTIGGTDIKIGHGAVTLASITSCTNTSNPSVLIAAGLVAKKAVEKGLKTKPWVKTSLAPGSRVVTEYLETAGLQQYLDQIGFNTVGYGCMTCIGNSGPLPEPVVEAIQEGDLVVASVLSGNRNFEGRVNPHIKANYLASPPLVVAYALAGTVVNDIVNDAIGQDSNGQDVFLKDIWPTNAEIQEAMDRSINAEMFKKVYDGIEKSNADWNAIPVAEGALFDWKEDSTYIQNPPFFDTLAGGAHEIESIKGARALVKVGDSVTTDHISPAGSFKADTPAGRYLTERGIAPKDFNSYGSRRGNDRIMTRGTFANIRLKNQLAPGTEGGFTTNFLNGEVTSIFDASTAYKEAGVPLVVLAGKDYGMGSSRDWAAKGTFLLGVKAVIAESFERIHRSNLVGMGVLPLQYKNGETADSLGINGDETFEFVLPGDLKPRQDVTVKVTGKDGNTRDITVMCRIDTPVEIDYYKNGGILQTVLRGILSKSQGEVKA.

Positions 1 to 2 (MS) are excised as a propeptide. Cysteine 441, cysteine 507, and cysteine 510 together coordinate [4Fe-4S] cluster.

This sequence belongs to the aconitase/IPM isomerase family. As to quaternary structure, monomer. It depends on [4Fe-4S] cluster as a cofactor.

The enzyme catalyses citrate = D-threo-isocitrate. The catalysed reaction is (2S,3R)-3-hydroxybutane-1,2,3-tricarboxylate = 2-methyl-cis-aconitate + H2O. Its pathway is carbohydrate metabolism; tricarboxylic acid cycle; isocitrate from oxaloacetate: step 2/2. It participates in organic acid metabolism; propanoate degradation. Involved in the catabolism of short chain fatty acids (SCFA) via the tricarboxylic acid (TCA)(acetyl degradation route) and probably the 2-methylcitrate cycle I (propionate degradation route). Catalyzes the reversible isomerization of citrate to isocitrate via cis-aconitate. Could catalyze the hydration of 2-methyl-cis-aconitate to yield (2R,3S)-2-methylisocitrate. The apo form of AcnA functions as a RNA-binding regulatory protein. The chain is Aconitate hydratase A (acn) from Deinococcus radiodurans (strain ATCC 13939 / DSM 20539 / JCM 16871 / CCUG 27074 / LMG 4051 / NBRC 15346 / NCIMB 9279 / VKM B-1422 / R1).